A 518-amino-acid chain; its full sequence is Adenine deaminase (518 aa).

Belongs to the metallo-dependent hydrolases superfamily. Adenine deaminase family. Requires Mn(2+) as cofactor.

It catalyses the reaction adenine + H2O + H(+) = hypoxanthine + NH4(+). The polypeptide is Adenine deaminase (Methanoculleus marisnigri (strain ATCC 35101 / DSM 1498 / JR1)).